The following is a 121-amino-acid chain: Putative viral protein-binding protein C1 (121 aa).

The segment at 21 to 57 is disordered; that stretch reads PWDRTRGHPDVPWRNLTSSPTRPLAQPAGSCMPAEPS.

In terms of assembly, interacts with core protein of hepatitis B virus.

The sequence is that of Putative viral protein-binding protein C1 from Homo sapiens (Human).